A 325-amino-acid polypeptide reads, in one-letter code: NADH-quinone oxidoreductase subunit H (325 aa).

The next 8 membrane-spanning stretches (helical) occupy residues 11–31, 81–101, 114–134, 154–174, 186–206, 237–257, 265–285, and 304–324; these read ILLT…CGAF, FIFT…FAIV, IGIL…LFAG, VSYE…AGSF, MWNI…GVAV, FFVG…TLFF, LPSF…FILI, and ICLP…LYNA.

The protein belongs to the complex I subunit 1 family. NDH-1 is composed of 13 different subunits. Subunits NuoA, H, J, K, L, M, N constitute the membrane sector of the complex.

The protein localises to the cell inner membrane. The catalysed reaction is a quinone + NADH + 5 H(+)(in) = a quinol + NAD(+) + 4 H(+)(out). In terms of biological role, NDH-1 shuttles electrons from NADH, via FMN and iron-sulfur (Fe-S) centers, to quinones in the respiratory chain. The immediate electron acceptor for the enzyme in this species is believed to be ubiquinone. Couples the redox reaction to proton translocation (for every two electrons transferred, four hydrogen ions are translocated across the cytoplasmic membrane), and thus conserves the redox energy in a proton gradient. This subunit may bind ubiquinone. The polypeptide is NADH-quinone oxidoreductase subunit H (Proteus mirabilis (strain HI4320)).